The primary structure comprises 81 residues: Photosystem I iron-sulfur center (81 aa).

4Fe-4S ferredoxin-type domains are found at residues 2-31 (SHSVKIYDTCIGCTQCVRACPTDVLEMIPW) and 39-68 (IASAPRTEDCVGCKRCESACPTDFLSVRVY). The [4Fe-4S] cluster site is built by cysteine 11, cysteine 14, cysteine 17, cysteine 21, cysteine 48, cysteine 51, cysteine 54, and cysteine 58.

In terms of assembly, the eukaryotic PSI reaction center is composed of at least 11 subunits. [4Fe-4S] cluster is required as a cofactor.

It is found in the plastid. The protein localises to the chloroplast thylakoid membrane. It catalyses the reaction reduced [plastocyanin] + hnu + oxidized [2Fe-2S]-[ferredoxin] = oxidized [plastocyanin] + reduced [2Fe-2S]-[ferredoxin]. Its function is as follows. Apoprotein for the two 4Fe-4S centers FA and FB of photosystem I (PSI); essential for photochemical activity. FB is the terminal electron acceptor of PSI, donating electrons to ferredoxin. The C-terminus interacts with PsaA/B/D and helps assemble the protein into the PSI complex. Required for binding of PsaD and PsaE to PSI. PSI is a plastocyanin-ferredoxin oxidoreductase, converting photonic excitation into a charge separation, which transfers an electron from the donor P700 chlorophyll pair to the spectroscopically characterized acceptors A0, A1, FX, FA and FB in turn. This Vitis vinifera (Grape) protein is Photosystem I iron-sulfur center.